The following is a 206-amino-acid chain: Large ribosomal subunit protein uL13 (206 aa).

It belongs to the universal ribosomal protein uL13 family.

The protein is Large ribosomal subunit protein uL13 (RPL13A) of Picea mariana (Black spruce).